The primary structure comprises 152 residues: Large ribosomal subunit protein uL11 (152 aa).

It belongs to the universal ribosomal protein uL11 family. Part of the ribosomal stalk of the 50S ribosomal subunit. Interacts with L10 and the large rRNA to form the base of the stalk. L10 forms an elongated spine to which L12 dimers bind in a sequential fashion forming a multimeric L10(L12)X complex. In terms of processing, one or more lysine residues are methylated.

In terms of biological role, forms part of the ribosomal stalk which helps the ribosome interact with GTP-bound translation factors. In Mycoplasmoides gallisepticum (strain R(low / passage 15 / clone 2)) (Mycoplasma gallisepticum), this protein is Large ribosomal subunit protein uL11.